Here is a 151-residue protein sequence, read N- to C-terminus: Cytochrome c-type biogenesis protein CcmE 2 (151 aa).

Over 1–8 (MNPLRKKR) the chain is Cytoplasmic. Residues 9 to 29 (LVIILAILVGVGAAVGLALSA) traverse the membrane as a helical; Signal-anchor for type II membrane protein segment. At 30–151 (LQQNINLFYT…QSAPAPGKEG (122 aa)) the chain is on the periplasmic side. Residues His124 and Tyr128 each coordinate heme.

The protein belongs to the CcmE/CycJ family.

It is found in the cell inner membrane. Heme chaperone required for the biogenesis of c-type cytochromes. Transiently binds heme delivered by CcmC and transfers the heme to apo-cytochromes in a process facilitated by CcmF and CcmH. The chain is Cytochrome c-type biogenesis protein CcmE 2 from Pseudomonas fluorescens (strain Pf0-1).